Here is a 424-residue protein sequence, read N- to C-terminus: Formyl-CoA:oxalate CoA-transferase (424 aa).

Residues 17–18 (QS), Arg38, 96–98 (NFA), Arg104, and 136–139 (KVYE) contribute to the CoA site. Asp168 acts as the Nucleophile in catalysis. Substrate is bound at residue 247 to 249 (GGQ).

It belongs to the CoA-transferase III family. Frc subfamily. As to quaternary structure, homodimer.

It catalyses the reaction formyl-CoA + oxalate = oxalyl-CoA + formate. It functions in the pathway metabolic intermediate degradation; oxalate degradation; CO(2) and formate from oxalate: step 1/2. Involved in the catabolism of oxalate and in the adapatation to low pH via the induction of the oxalate-dependent acid tolerance response (ATR). Catalyzes the transfer of the CoA moiety from formyl-CoA to oxalate. The sequence is that of Formyl-CoA:oxalate CoA-transferase from Afipia carboxidovorans (strain ATCC 49405 / DSM 1227 / KCTC 32145 / OM5) (Oligotropha carboxidovorans).